Here is a 1063-residue protein sequence, read N- to C-terminus: Exportin-1 (1063 aa).

The 67-residue stretch at 43–109 (AQSILTTLKE…KKYVVSLIIK (67 aa)) folds into the Importin N-terminal domain. The tract at residues 1034-1063 (AEEQSNKHQMQRNIPGMLNPHELPEDMQDE) is disordered.

Belongs to the exportin family. In terms of assembly, interacts with Clbn (via its N-terminus). Associates with the nuclear pore complex via interaction with mbo and Nup214. Interacts with target proteins containing NES sequences such as actin and dl. High expression observed in the developing embryonic brain, hind gut and posterior spiracles shortly before dorsal closure; and in the ventral nerve cord, midgut and somatic musculature shortly after dorsal closure. Expression increases when the tissue is well developed.

Its subcellular location is the nucleus. It localises to the nucleus membrane. Receptor for the leucine-rich nuclear export signal (NES). Binds cooperatively to the NES on its target protein and to the small GTPase Ran in its active GTP-bound form. Involved in the export of dl, RpS2 and the pre-40S ribosome from the nucleus to the cytoplasm. Plays an important role in nuclear pore assembly by mediating nucleoporin condensation and biogenesis of annulate lamellae. Required for the function or maintenance of certain tissues such as brain and gut. The chain is Exportin-1 from Drosophila melanogaster (Fruit fly).